The primary structure comprises 419 residues: Dual specificity mitogen-activated protein kinase kinase 7 (419 aa).

Position 2 is an N-acetylalanine (Ala-2). Positions 2–30 (AASSLEQKLSRLEAKLKQENREARRRIDL) form a coiled coil. Basic and acidic residues predominate over residues 18–30 (KQENREARRRIDL). Residues 18–77 (KQENREARRRIDLNLDISPQRPRPTLQLPLANDGGSRSPSSESSPQHPTPPSRPRHMLGL) form a disordered region. Residues 36 to 63 (PQRPRPTLQLPLANDGGSRSPSSESSPQ) are compositionally biased toward low complexity. A d Domain region spans residues 37–57 (QRPRPTLQLPLANDGGSRSPS). In terms of domain architecture, Protein kinase spans 120-380 (LENLGEMGSG…YNKLLEHSFI (261 aa)). ATP-binding positions include 126–134 (MGSGTCGQV) and Lys-149. Asp-243 functions as the Proton acceptor in the catalytic mechanism. A Phosphoserine; by MAP3K modification is found at Ser-271. Thr-275 is modified (phosphothreonine; by MAP3K). A DVD domain region spans residues 377–400 (HSFIKHYETLEVDVASWFKDVMAK). A Phosphoserine modification is found at Ser-411.

It belongs to the protein kinase superfamily. STE Ser/Thr protein kinase family. MAP kinase kinase subfamily. As to quaternary structure, interacts with VRK2. Interacts (via its D domain) with its substrates MAPK8/JNK1, MAPK9/JNK2 and MAPK10/JNK3. Interacts (via its DVD domain) with MAP3Ks activators like MAP3K5/ASK1 and MAP3K1/MEKK1. Interacts with MAPK8IP1/JIP1, MAPK8IP2/JIP2 and MAPK8IP3/JIP3 scaffold proteins. Interacts with RASSF7, the interaction promotes phosphorylation. Found in a complex with SH3RF1, RAC1, MAP3K11/MLK3, MAPK8IP1/JIP1 and MAPK8/JNK1. Found in a complex with SH3RF1, RAC2, MAP3K7/TAK1, MAPK8IP1/JIP1, MAPK8/JNK1 and MAPK9/JNK2. Requires Mg(2+) as cofactor. Post-translationally, activated by phosphorylation on Ser-271 and Thr-275 by MAP kinase kinase kinases (MAP3Ks).

It is found in the nucleus. Its subcellular location is the cytoplasm. The catalysed reaction is L-seryl-[protein] + ATP = O-phospho-L-seryl-[protein] + ADP + H(+). The enzyme catalyses L-threonyl-[protein] + ATP = O-phospho-L-threonyl-[protein] + ADP + H(+). It catalyses the reaction L-tyrosyl-[protein] + ATP = O-phospho-L-tyrosyl-[protein] + ADP + H(+). Its activity is regulated as follows. Activated by phosphorylation by specific MAP kinase kinase kinases such as MAP3K1/MEKK1, MAP3K3/MEKK3, MAP3K11/MLK3 and MAP3K12/DLK. Its function is as follows. Dual specificity protein kinase which acts as an essential component of the MAP kinase signal transduction pathway. Essential component of the stress-activated protein kinase/c-Jun N-terminal kinase (SAP/JNK) signaling pathway. With MAP2K4/MKK4, is the one of the only known kinase to directly activate the stress-activated protein kinase/c-Jun N-terminal kinases MAPK8/JNK1, MAPK9/JNK2 and MAPK10/JNK3. MAP2K4/MKK4 and MAP2K7/MKK7 both activate the JNKs by phosphorylation, but they differ in their preference for the phosphorylation site in the Thr-Pro-Tyr motif. MAP2K4/MKK4 shows preference for phosphorylation of the Tyr residue and MAP2K7/MKK7 for the Thr residue. The monophosphorylation of JNKs on the Thr residue is sufficient to increase JNK activity indicating that MAP2K7/MKK7 is important to trigger JNK activity, while the additional phosphorylation of the Tyr residue by MAP2K4/MKK4 ensures optimal JNK activation. Has a specific role in JNK signal transduction pathway activated by pro-inflammatory cytokines. The MKK/JNK signaling pathway is also involved in mitochondrial death signaling pathway, including the release cytochrome c, leading to apoptosis. Part of a non-canonical MAPK signaling pathway, composed of the upstream MAP3K12 kinase and downstream MAP kinases MAPK1/ERK2 and MAPK3/ERK1, that enhances the AP-1-mediated transcription of APP in response to APOE. The sequence is that of Dual specificity mitogen-activated protein kinase kinase 7 from Rattus norvegicus (Rat).